The chain runs to 126 residues: Adenosine 5'-monophosphoramidase HINT1 (126 aa).

N-acetylalanine is present on Ala2. In terms of domain architecture, HIT spans Ile18 to Gly126. 2 positions are modified to N6-acetyllysine: Lys21 and Lys30. An AMP-binding site is contributed by Asp43 to Ile44. Phosphoserine occurs at positions 45 and 72. Residues Asn99, Gly105–Ser107, and His112–His114 contribute to the AMP site. A Histidine triad motif motif is present at residues His110–His114. Catalysis depends on His112, which acts as the Tele-AMP-histidine intermediate.

The protein belongs to the HINT family. In terms of assembly, homodimer. Interacts with CDK7. Interacts with RUVBL1 and RUVBL2 and is associated with the LEF1/TCF1-CTNNB1 complex and with a KAT5 histone acetyltransferase complex. Identified in a complex with MITF and CTNNB1. Interacts with CDC34 and RBX1, and is part of a SCF (SKP2-CUL1-F-box protein) E3 ubiquitin-protein ligase complex. Interacts with SUMO1, SUMO2 and RGS17. Interacts with the Ten-1 ICD form of TENM1. Interacts with CALM1; interaction increases in the presence of calcium ions.

The protein resides in the cytoplasm. Its subcellular location is the nucleus. The catalysed reaction is adenosine 5'-phosphoramidate + H2O = AMP + NH4(+). Functionally, exhibits adenosine 5'-monophosphoramidase activity, hydrolyzing purine nucleotide phosphoramidates with a single phosphate group such as adenosine 5'monophosphoramidate (AMP-NH2) to yield AMP and NH2. Hydrolyzes adenosine 5'monophosphomorpholidate (AMP-morpholidate) and guanosine 5'monophosphomorpholidate (GMP-morpholidate). Hydrolyzes lysyl-AMP (AMP-N-epsilon-(N-alpha-acetyl lysine methyl ester)) generated by lysine tRNA ligase, as well as Met-AMP, His-AMP and Asp-AMP, lysyl-GMP (GMP-N-epsilon-(N-alpha-acetyl lysine methyl ester)) and AMP-N-alanine methyl ester. Can also convert adenosine 5'-O-phosphorothioate and guanosine 5'-O-phosphorothioate to the corresponding nucleoside 5'-O-phosphates with concomitant release of hydrogen sulfide. In addition, functions as a scaffolding protein that modulates transcriptional activation by the LEF1/TCF1-CTNNB1 complex and by the complex formed with MITF and CTNNB1. Modulates p53/TP53 levels and p53/TP53-mediated apoptosis. Modulates proteasomal degradation of target proteins by the SCF (SKP2-CUL1-F-box protein) E3 ubiquitin-protein ligase complex. Also exhibits SUMO-specific isopeptidase activity, deconjugating SUMO1 from RANGAP1 and RGS17. This is Adenosine 5'-monophosphoramidase HINT1 (HINT1) from Pongo abelii (Sumatran orangutan).